Consider the following 311-residue polypeptide: Sulfate adenylyltransferase subunit 2 (311 aa).

Belongs to the PAPS reductase family. CysD subfamily. As to quaternary structure, heterodimer composed of CysD, the smaller subunit, and CysN.

The enzyme catalyses sulfate + ATP + H(+) = adenosine 5'-phosphosulfate + diphosphate. It functions in the pathway sulfur metabolism; hydrogen sulfide biosynthesis; sulfite from sulfate: step 1/3. Its function is as follows. With CysN forms the ATP sulfurylase (ATPS) that catalyzes the adenylation of sulfate producing adenosine 5'-phosphosulfate (APS) and diphosphate, the first enzymatic step in sulfur assimilation pathway. APS synthesis involves the formation of a high-energy phosphoric-sulfuric acid anhydride bond driven by GTP hydrolysis by CysN coupled to ATP hydrolysis by CysD. This chain is Sulfate adenylyltransferase subunit 2, found in Methylobacterium sp. (strain 4-46).